The sequence spans 347 residues: Pre-B-cell leukemia transcription factor 1 (347 aa).

A disordered region spans residues 1–40; the sequence is MDDQPRLMHSHPGVGMAGHPSLSQHMQDGTGANEGEGGRK. The PBC domain maps to 38–232; sequence GRKQDIGDIL…VMILRSRFLD (195 aa). Residues 45–124 form a PBC-A region; it reads DILQQIMTIT…EGVAGPEKGG (80 aa). Residues 127 to 232 are PBC-B; the sequence is AAAAAAAAAS…VMILRSRFLD (106 aa). Residues 233-295 constitute a DNA-binding region (homeobox; TALE-type); sequence ARRKRRNFNK…NKRIRYKKNI (63 aa). Over residues 318-331 the composition is skewed to polar residues; the sequence is VHGSQANSPSTPSS. The segment at 318–347 is disordered; it reads VHGSQANSPSTPSSAGGYPSPCYQSDRRIQ.

The protein belongs to the TALE/PBX homeobox family. In terms of assembly, forms a heterodimer with meis1; the interaction is necessary for neural fate induction.

The protein localises to the nucleus. Functionally, acts as a transcriptional activator in complex with isoform 2 of meis1, to induce posterior neural and neural crest gene expression, and thereby specify hindbrain and neural crest cell fate. Binds to a highly conserved region in the promoter of the neural crest gene zic3. Required for the nuclear transport or retention of meis1. The sequence is that of Pre-B-cell leukemia transcription factor 1 from Xenopus tropicalis (Western clawed frog).